A 104-amino-acid polypeptide reads, in one-letter code: Large ribosomal subunit protein uL24 (104 aa).

It belongs to the universal ribosomal protein uL24 family. In terms of assembly, part of the 50S ribosomal subunit.

In terms of biological role, one of two assembly initiator proteins, it binds directly to the 5'-end of the 23S rRNA, where it nucleates assembly of the 50S subunit. Its function is as follows. One of the proteins that surrounds the polypeptide exit tunnel on the outside of the subunit. The sequence is that of Large ribosomal subunit protein uL24 from Serratia proteamaculans (strain 568).